A 382-amino-acid polypeptide reads, in one-letter code: MAKRDYYEVLGVSRTASADELKKAYRTKAKELHPDRNADNPQAEAQFKEVNEAYDVLRDADKKAAYDRYGHAAFEGGMGGGARAGGGYGQQGDFASAFSDVFEDLFGDFMGGRGGAPRSRAQRGSDLRYNLRVTLDEAYRGVQKTINVPASVACDACKGTGAEGGAEAVTCPTCSGMGKVRAQQGFFTVERTCPTCNGMGQIVKNPCKVCHGAGRVEKERSLSVNIPAGVETGTRIRLAGEGEAGMRGGPSGDLYIFIEVREHALFQRDGVHLFCRVPVSITAAALGGEVEVPTIDGGSSRVKIPAGSQTGKQMRLRGKGMPALRGGGAGDMLIELAVETPVNLTARQKELLREFEKLSEDNNPEGKSFFSKVKGFWDGMTG.

One can recognise a J domain in the interval 5–70; sequence DYYEVLGVSR…DKKAAYDRYG (66 aa). A CR-type zinc finger spans residues 141 to 219; the sequence is GVQKTINVPA…CHGAGRVEKE (79 aa). The Zn(2+) site is built by Cys-154, Cys-157, Cys-171, Cys-174, Cys-193, Cys-196, Cys-207, and Cys-210. CXXCXGXG motif repeat units lie at residues 154–161, 171–178, 193–200, and 207–214; these read CDACKGTG, CPTCSGMG, CPTCNGMG, and CKVCHGAG.

It belongs to the DnaJ family. As to quaternary structure, homodimer. Zn(2+) is required as a cofactor.

Its subcellular location is the cytoplasm. Participates actively in the response to hyperosmotic and heat shock by preventing the aggregation of stress-denatured proteins and by disaggregating proteins, also in an autonomous, DnaK-independent fashion. Unfolded proteins bind initially to DnaJ; upon interaction with the DnaJ-bound protein, DnaK hydrolyzes its bound ATP, resulting in the formation of a stable complex. GrpE releases ADP from DnaK; ATP binding to DnaK triggers the release of the substrate protein, thus completing the reaction cycle. Several rounds of ATP-dependent interactions between DnaJ, DnaK and GrpE are required for fully efficient folding. Also involved, together with DnaK and GrpE, in the DNA replication of plasmids through activation of initiation proteins. The sequence is that of Chaperone protein DnaJ from Cereibacter sphaeroides (strain ATCC 17029 / ATH 2.4.9) (Rhodobacter sphaeroides).